The primary structure comprises 78 residues: MNQIRLFAQSALVSVMGMGMVFAFLLLLICVVRCVGALVSSFGWDRGPDEGVGAAVPAGGALAAAIAVAVHEKARSTS.

The next 2 membrane-spanning stretches (helical) occupy residues 12 to 32 (LVSVMGMGMVFAFLLLLICVV) and 51 to 71 (GVGAAVPAGGALAAAIAVAVH).

Its subcellular location is the cell membrane. This is an uncharacterized protein from Treponema pallidum (strain Nichols).